The primary structure comprises 165 residues: 3-isopropylmalate dehydratase small subunit (165 aa).

This sequence belongs to the LeuD family. LeuD type 2 subfamily. In terms of assembly, heterodimer of LeuC and LeuD.

The catalysed reaction is (2R,3S)-3-isopropylmalate = (2S)-2-isopropylmalate. Its pathway is amino-acid biosynthesis; L-leucine biosynthesis; L-leucine from 3-methyl-2-oxobutanoate: step 2/4. Functionally, catalyzes the isomerization between 2-isopropylmalate and 3-isopropylmalate, via the formation of 2-isopropylmaleate. The protein is 3-isopropylmalate dehydratase small subunit of Lachnoclostridium phytofermentans (strain ATCC 700394 / DSM 18823 / ISDg) (Clostridium phytofermentans).